Here is a 124-residue protein sequence, read N- to C-terminus: Small ribosomal subunit protein uS13 (124 aa).

Residues 94–124 (RGMPVRGQRTKTNARTRKGPKRTIAGKKKAR) form a disordered region.

This sequence belongs to the universal ribosomal protein uS13 family. In terms of assembly, part of the 30S ribosomal subunit. Forms a loose heterodimer with protein S19. Forms two bridges to the 50S subunit in the 70S ribosome.

Located at the top of the head of the 30S subunit, it contacts several helices of the 16S rRNA. In the 70S ribosome it contacts the 23S rRNA (bridge B1a) and protein L5 of the 50S subunit (bridge B1b), connecting the 2 subunits; these bridges are implicated in subunit movement. Contacts the tRNAs in the A and P-sites. The sequence is that of Small ribosomal subunit protein uS13 from Mycobacterium tuberculosis (strain ATCC 25177 / H37Ra).